Reading from the N-terminus, the 351-residue chain is Transmembrane protein DDB_G0272716 (351 aa).

Asn4 and Asn59 each carry an N-linked (GlcNAc...) asparagine glycan. Transmembrane regions (helical) follow at residues 175–195 (FSSL…TAIG) and 215–235 (VVAP…GAFI). Asn345 is a glycosylation site (N-linked (GlcNAc...) asparagine).

The protein localises to the membrane. This is Transmembrane protein DDB_G0272716 from Dictyostelium discoideum (Social amoeba).